We begin with the raw amino-acid sequence, 131 residues long: Small ribosomal subunit protein uS11 (131 aa).

Belongs to the universal ribosomal protein uS11 family. As to quaternary structure, part of the 30S ribosomal subunit. Interacts with proteins S7 and S18. Binds to IF-3.

Functionally, located on the platform of the 30S subunit, it bridges several disparate RNA helices of the 16S rRNA. Forms part of the Shine-Dalgarno cleft in the 70S ribosome. The sequence is that of Small ribosomal subunit protein uS11 from Helicobacter pylori (strain ATCC 700392 / 26695) (Campylobacter pylori).